The following is a 381-amino-acid chain: 1-deoxy-D-xylulose 5-phosphate reductoisomerase (381 aa).

NADPH-binding residues include Thr-10, Gly-11, Ser-12, Ile-13, and Asn-120. 1-deoxy-D-xylulose 5-phosphate is bound at residue Lys-121. Glu-122 provides a ligand contact to NADPH. Position 146 (Asp-146) interacts with Mn(2+). Positions 147, 148, 172, and 195 each coordinate 1-deoxy-D-xylulose 5-phosphate. A Mn(2+)-binding site is contributed by Glu-148. Gly-201 serves as a coordination point for NADPH. The 1-deoxy-D-xylulose 5-phosphate site is built by Ser-208, Asn-213, Lys-214, and Glu-217. Residue Glu-217 coordinates Mn(2+).

Belongs to the DXR family. Mg(2+) serves as cofactor. Mn(2+) is required as a cofactor.

It catalyses the reaction 2-C-methyl-D-erythritol 4-phosphate + NADP(+) = 1-deoxy-D-xylulose 5-phosphate + NADPH + H(+). It participates in isoprenoid biosynthesis; isopentenyl diphosphate biosynthesis via DXP pathway; isopentenyl diphosphate from 1-deoxy-D-xylulose 5-phosphate: step 1/6. Its function is as follows. Catalyzes the NADPH-dependent rearrangement and reduction of 1-deoxy-D-xylulose-5-phosphate (DXP) to 2-C-methyl-D-erythritol 4-phosphate (MEP). The protein is 1-deoxy-D-xylulose 5-phosphate reductoisomerase of Thermodesulfovibrio yellowstonii (strain ATCC 51303 / DSM 11347 / YP87).